The following is a 183-amino-acid chain: Large ribosomal subunit protein uL6 (183 aa).

Belongs to the universal ribosomal protein uL6 family. As to quaternary structure, part of the 50S ribosomal subunit.

In terms of biological role, this protein binds to the 23S rRNA, and is important in its secondary structure. It is located near the subunit interface in the base of the L7/L12 stalk, and near the tRNA binding site of the peptidyltransferase center. This chain is Large ribosomal subunit protein uL6, found in Chlamydia abortus (strain DSM 27085 / S26/3) (Chlamydophila abortus).